We begin with the raw amino-acid sequence, 885 residues long: DNA mismatch repair protein MutS (885 aa).

An ATP-binding site is contributed by 626 to 633; that stretch reads GPNMGGKS.

It belongs to the DNA mismatch repair MutS family.

Its function is as follows. This protein is involved in the repair of mismatches in DNA. It is possible that it carries out the mismatch recognition step. This protein has a weak ATPase activity. The polypeptide is DNA mismatch repair protein MutS (Burkholderia lata (strain ATCC 17760 / DSM 23089 / LMG 22485 / NCIMB 9086 / R18194 / 383)).